The primary structure comprises 67 residues: Prokaryotic ubiquitin-like protein Pup (67 aa).

Positions 1-36 (MPQQFEQPQAQQAVTQEDDALATTQAATQTESTDQA) are enriched in low complexity. The segment at 1–38 (MPQQFEQPQAQQAVTQEDDALATTQAATQTESTDQADV) is disordered. Residues 23–61 (TTQAATQTESTDQADVLDDILDDIESTLETNAEEYVNSF) form an ARC ATPase binding region. An Isoglutamyl lysine isopeptide (Glu-Lys) (interchain with K-? in acceptor proteins) cross-link involves residue E67.

Belongs to the prokaryotic ubiquitin-like protein family. As to quaternary structure, strongly interacts with the proteasome-associated ATPase ARC through a hydrophobic interface; the interacting region of Pup lies in its C-terminal half. There is one Pup binding site per ARC hexamer ring.

Its pathway is protein degradation; proteasomal Pup-dependent pathway. In terms of biological role, protein modifier that is covalently attached to lysine residues of substrate proteins, thereby targeting them for proteasomal degradation. The tagging system is termed pupylation. The protein is Prokaryotic ubiquitin-like protein Pup of Bifidobacterium longum subsp. infantis (strain ATCC 15697 / DSM 20088 / JCM 1222 / NCTC 11817 / S12).